The primary structure comprises 186 residues: Alkyl hydroperoxide reductase AhpD (186 aa).

Cys-132 (proton donor) is an active-site residue. Residues Cys-132 and Cys-135 are joined by a disulfide bond. The Cysteine sulfenic acid (-SOH) intermediate role is filled by Cys-135.

Belongs to the AhpD family.

It catalyses the reaction N(6)-[(R)-dihydrolipoyl]-L-lysyl-[lipoyl-carrier protein] + a hydroperoxide = N(6)-[(R)-lipoyl]-L-lysyl-[lipoyl-carrier protein] + an alcohol + H2O. Functionally, antioxidant protein with alkyl hydroperoxidase activity. Required for the reduction of the AhpC active site cysteine residues and for the regeneration of the AhpC enzyme activity. In Anaeromyxobacter dehalogenans (strain 2CP-C), this protein is Alkyl hydroperoxide reductase AhpD.